We begin with the raw amino-acid sequence, 774 residues long: Shugoshin (774 aa).

Residues 41-105 (SLRIRGLENE…AELSSLLASL (65 aa)) are a coiled coil. 3 disordered regions span residues 106–151 (GEPP…QEGR), 205–661 (SPSP…DAQL), and 676–774 (CASP…SMML). Residues 109–120 (PSKRRLSEERRY) are compositionally biased toward basic and acidic residues. A compositionally biased stretch (acidic residues) spans 214–224 (AEETETTEQVE). Residues 297–318 (GDNQNEPNKATKLQQGKENGNE) are compositionally biased toward polar residues. Residues 382-398 (KGKEKVDLPAPDKKSAV) are compositionally biased toward basic and acidic residues. The segment covering 399-409 (EETQGNSTSAF) has biased composition (polar residues). 2 stretches are compositionally biased toward basic and acidic residues: residues 482 to 495 (NLRD…KELF) and 549 to 558 (FEKEKEKEPQ). 2 stretches are compositionally biased toward polar residues: residues 595–604 (PSVQEQSTLN) and 640–651 (QSMSRSVPTIPT). Low complexity predominate over residues 706–722 (ASSAASTETTATASAKP). Residues 743–754 (LAQEEEDEEDVG) show a composition bias toward acidic residues. The segment covering 765-774 (RASRRRSMML) has biased composition (basic residues).

This sequence belongs to the shugoshin family.

The protein resides in the nucleus. It localises to the chromosome. The protein localises to the centromere. Functionally, plays a central role in chromosome cohesion during cell division by preventing premature dissociation of cohesin complex from centromeres after prophase, when most of cohesin complex dissociates from chromosomes arms. The protein is Shugoshin (sgo-1) of Neurospora crassa (strain ATCC 24698 / 74-OR23-1A / CBS 708.71 / DSM 1257 / FGSC 987).